Consider the following 82-residue polypeptide: Host transcription reprogramming factor 10 (82 aa).

An N-terminal signal peptide occupies residues 1 to 19 (MQIFNMVSLVALFALGATA). A C2H2-type zinc finger spans residues 57 to 81 (WVCHACNKQFTTPAALQKHKDTVVH).

It is found in the secreted. The protein resides in the host nucleus. Functionally, probable secreted effector that translocates into the nuclei of host cells to reprogram the expression of targeted genes by binding on effector binding elements in rice. This chain is Host transcription reprogramming factor 10, found in Pyricularia oryzae (strain 70-15 / ATCC MYA-4617 / FGSC 8958) (Rice blast fungus).